A 428-amino-acid polypeptide reads, in one-letter code: Sarcosine reductase complex component B subunit alpha (428 aa).

Cys-242 carries the post-translational modification Pyruvic acid (Cys).

As to quaternary structure, heterotetramer of two alpha and two beta subunits. Component of the sarcosine reductase complex, together with components A and C. PB is substrate specific. The peptide chain is cleaved into beta and alpha chains, and the alpha chain N-terminal cysteine is deaminated and oxidized to form a reactive pyruvoyl group.

The catalysed reaction is acetyl phosphate + methylamine + [thioredoxin]-disulfide + H2O = sarcosine + [thioredoxin]-dithiol + phosphate + H(+). In terms of biological role, in the first step of sarcosine reductase, the substrate is bound to component PB via a Schiff base intermediate. Then the PB-activated substrate is nucleophilically attacked by the selenol anion of component PA to transform it to a carboxymethylated selenoether and the respective amine. By action of component PC, acetyl phosphate is formed, leaving component PA in its oxidized state. Finally component PA becomes reduced by the thioredoxin system to start a new catalytic cycle of reductive deamination. The sequence is that of Sarcosine reductase complex component B subunit alpha (grdG) from Peptoclostridium acidaminophilum (Eubacterium acidaminophilum).